Here is a 120-residue protein sequence, read N- to C-terminus: Synaptobrevin (120 aa).

Positions 1–38 (MSAPPSGPAPDAQGGAPGQPTGPPGAPPNTTSNRRLQQ) are disordered. Over 1–98 (MSAPPSGPAP…KRKYWWKNCK (98 aa)) the chain is Cytoplasmic. Residues 29 to 38 (NTTSNRRLQQ) show a composition bias toward polar residues. In terms of domain architecture, v-SNARE coiled-coil homology spans 35-95 (RLQQTQAQVE…AKLKRKYWWK (61 aa)). A helical; Anchor for type IV membrane protein membrane pass occupies residues 99-118 (MMIMLGGIGAIIVIVIIIYF). The Vesicular segment spans residues 119-120 (FT).

The protein belongs to the synaptobrevin family. As to expression, nervous system specific.

It is found in the cytoplasmic vesicle. Its subcellular location is the secretory vesicle. The protein localises to the synaptic vesicle membrane. The protein resides in the synapse. It localises to the synaptosome. Its function is as follows. This protein may play a role in packaging, transport or release of neurotransmitters. The sequence is that of Synaptobrevin from Tetronarce californica (Pacific electric ray).